We begin with the raw amino-acid sequence, 221 residues long: Large ribosomal subunit protein bL25 (221 aa).

Positions 192–221 (APRVEKEETEEDTVAPGDVPAENSKDADEE) are disordered.

Belongs to the bacterial ribosomal protein bL25 family. CTC subfamily. Part of the 50S ribosomal subunit; part of the 5S rRNA/L5/L18/L25 subcomplex. Contacts the 5S rRNA. Binds to the 5S rRNA independently of L5 and L18.

Functionally, this is one of the proteins that binds to the 5S RNA in the ribosome where it forms part of the central protuberance. This chain is Large ribosomal subunit protein bL25, found in Idiomarina loihiensis (strain ATCC BAA-735 / DSM 15497 / L2-TR).